We begin with the raw amino-acid sequence, 462 residues long: ATP synthase subunit beta (462 aa).

151–158 contacts ATP; that stretch reads GGAGVGKT.

Belongs to the ATPase alpha/beta chains family. In terms of assembly, F-type ATPases have 2 components, CF(1) - the catalytic core - and CF(0) - the membrane proton channel. CF(1) has five subunits: alpha(3), beta(3), gamma(1), delta(1), epsilon(1). CF(0) has four main subunits: a(1), b(1), b'(1) and c(9-12).

It localises to the cell inner membrane. The catalysed reaction is ATP + H2O + 4 H(+)(in) = ADP + phosphate + 5 H(+)(out). Produces ATP from ADP in the presence of a proton gradient across the membrane. The catalytic sites are hosted primarily by the beta subunits. In Chlorobium phaeobacteroides (strain DSM 266 / SMG 266 / 2430), this protein is ATP synthase subunit beta.